A 308-amino-acid chain; its full sequence is Carbonic anhydrase 4 (308 aa).

The first 18 residues, 1–18 (MQLLFALLALGALRPLAG), serve as a signal peptide directing secretion. The Alpha-carbonic anhydrase domain occupies 21 to 281 (LHWCYEIQAS…LGDRSVFKSQ (261 aa)). Intrachain disulfides connect Cys24-Cys34 and Cys44-Cys225. Asn31 carries an N-linked (GlcNAc...) asparagine glycan. Catalysis depends on His86, which acts as the Proton donor/acceptor. Zn(2+) is bound by residues His113, His115, and His138. Asn192 carries an N-linked (GlcNAc...) asparagine glycan. 221–222 (TT) provides a ligand contact to substrate. Ser280 carries the GPI-anchor amidated serine lipid modification. Positions 281 to 308 (QAAGQLLPLPLPTLLVPTLACVMAGLLR) are cleaved as a propeptide — removed in mature form.

Belongs to the alpha-carbonic anhydrase family. Interacts with SLC4A4. Zn(2+) serves as cofactor.

Its subcellular location is the cell membrane. The enzyme catalyses hydrogencarbonate + H(+) = CO2 + H2O. With respect to regulation, inhibited by acetazolamide. Functionally, catalyzes the reversible hydration of carbon dioxide into bicarbonate and protons and thus is essential to maintaining intracellular and extracellular pH. May stimulate the sodium/bicarbonate transporter activity of SLC4A4 that acts in pH homeostasis. It is essential for acid overload removal from the retina and retina epithelium, and acid release in the choriocapillaris in the choroid. This chain is Carbonic anhydrase 4 (CA4), found in Oryctolagus cuniculus (Rabbit).